The chain runs to 224 residues: MAAAVPQRAWTVEQLRSEQLPKKDIIKFLQDHGSDSFLAEHKLLGNIKNVAKTANKDHLVTAYNHLFETKRFKGSENVTKVSEQVKNVKLNEDKPKETKSEETPDEGPPKYTKSVLKKGDKTNFPKKGDVVHCWYTGTLQDGTVFDTNIQTSSKKKKNAKPLSFKVGVGKVIRGWDEALLTMSKGEKARLEIEPEWAYGKKGQPDAKIPPNAKLIFEVELVDID.

Alanine 2 is subject to N-acetylalanine. Position 36 is a phosphoserine (serine 36). The segment at 87-119 (NVKLNEDKPKETKSEETPDEGPPKYTKSVLKKG) is disordered. A compositionally biased stretch (basic and acidic residues) spans 89-102 (KLNEDKPKETKSEE). The residue at position 99 (lysine 99) is an N6-acetyllysine. The 97-residue stretch at 128–224 (GDVVHCWYTG…IFEVELVDID (97 aa)) folds into the PPIase FKBP-type domain. Phosphoserine is present on serine 152. Lysine 170 carries the post-translational modification N6-acetyllysine.

Belongs to the FKBP-type PPIase family.

It is found in the nucleus. The enzyme catalyses [protein]-peptidylproline (omega=180) = [protein]-peptidylproline (omega=0). With respect to regulation, inhibited preferentially by rapamycin over FK506. FK506- and rapamycin-binding proteins (FKBPs) constitute a family of receptors for the two immunosuppressants which inhibit T-cell proliferation by arresting two distinct cytoplasmic signal transmission pathways. PPIases accelerate the folding of proteins. The sequence is that of Peptidyl-prolyl cis-trans isomerase FKBP3 (FKBP3) from Oryctolagus cuniculus (Rabbit).